The primary structure comprises 122 residues: Large ribosomal subunit protein uL14c (122 aa).

It belongs to the universal ribosomal protein uL14 family. Part of the 50S ribosomal subunit.

It is found in the plastid. Its subcellular location is the chloroplast. Functionally, binds to 23S rRNA. In Pinus koraiensis (Korean pine), this protein is Large ribosomal subunit protein uL14c.